The chain runs to 315 residues: Eukaryotic translation initiation factor 2 subunit 1 (315 aa).

The 72-residue stretch at 17 to 88 (EDVVMVNVRS…EKGYIDLSKR (72 aa)) folds into the S1 motif domain. A phosphoserine mark is found at serine 49 and serine 52. Residues 292 to 315 (RLERENAEVDGDDDAEEMEAKTED) are disordered. Residues 299 to 308 (EVDGDDDAEE) show a composition bias toward acidic residues.

This sequence belongs to the eIF-2-alpha family. In terms of assembly, eukaryotic translation initiation factor 2 eIF2 is a heterotrimeric complex composed of an alpha (EIF2S1), a beta (EIF2S2) and a gamma (EIF2S3) chain. In terms of processing, phosphorylation at Ser-49 and Ser-52 stabilizes the eIF-2/GDP/eIF2B complex and prevents GDP/GTP exchange reaction, thus impairing the recycling of eIF-2 between successive rounds of initiation and leading to global inhibition of translation, while concomitantly initiating the preferential translation of integrated stress response (ISR)-specific mRNAs.

It is found in the cytoplasm. Its subcellular location is the stress granule. It localises to the cytosol. Its activity is regulated as follows. Activity is regulated by phosphorylation at Ser-49 and Ser-52, which stabilizes the eIF2/GDP/eIF2B complex and prevents the eIF2B-mediated exchange of GDP for GTP, thereby preventing the formation of the 43S pre-initiation complex (43S PIC). This results in the global attenuation of 5' cap-dependent protein synthesis and concomitant translation of ISR-specific mRNAs that contain a short upstream open reading frame (uORF) in their 5' UTR. Functionally, member of the eIF2 complex that functions in the early steps of protein synthesis by forming a ternary complex with GTP and initiator tRNA. This complex binds to a 40S ribosomal subunit, followed by mRNA binding to form a 43S pre-initiation complex. Junction of the 60S ribosomal subunit to form the 80S initiation complex is preceded by hydrolysis of the GTP bound to eIF2 and release of an eIF2-GDP binary complex. In order for eIF2 to recycle and catalyze another round of initiation, the GDP bound to eIF2 must exchange with GTP by way of a reaction catalyzed by eIF2B. EIF2S1/eIF2-alpha is a key component of the integrated stress response (ISR), required for adaptation to various stress: phosphorylation by metabolic-stress sensing protein kinases (EIF2AK1/HRI, EIF2AK2/PKR, EIF2AK3/PERK and EIF2AK4/GCN2) in response to stress converts EIF2S1/eIF2-alpha in a global protein synthesis inhibitor, leading to a attenuation of cap-dependent translation, while concomitantly initiating the preferential translation of ISR-specific mRNAs, such as the transcriptional activators ATF4 and QRICH1. This Gallus gallus (Chicken) protein is Eukaryotic translation initiation factor 2 subunit 1 (EIF2S1).